The primary structure comprises 356 residues: Anthranilate phosphoribosyltransferase (356 aa).

5-phospho-alpha-D-ribose 1-diphosphate is bound by residues G96, G99–D100, T104, N106–T109, K124–G132, and S136. G96 is an anthranilate binding site. S108 contributes to the Mg(2+) binding site. Position 127 (N127) interacts with anthranilate. R182 contributes to the anthranilate binding site. Residues D241 and E242 each coordinate Mg(2+).

It belongs to the anthranilate phosphoribosyltransferase family. Homodimer. Requires Mg(2+) as cofactor.

It catalyses the reaction N-(5-phospho-beta-D-ribosyl)anthranilate + diphosphate = 5-phospho-alpha-D-ribose 1-diphosphate + anthranilate. Its pathway is amino-acid biosynthesis; L-tryptophan biosynthesis; L-tryptophan from chorismate: step 2/5. Its function is as follows. Catalyzes the transfer of the phosphoribosyl group of 5-phosphorylribose-1-pyrophosphate (PRPP) to anthranilate to yield N-(5'-phosphoribosyl)-anthranilate (PRA). In Trichodesmium erythraeum (strain IMS101), this protein is Anthranilate phosphoribosyltransferase.